The sequence spans 91 residues: Cytochrome b-c1 complex subunit 10, mitochondrial (91 aa).

Residues 1–34 (MFATSILRSAYPAYKSPYGPKYQYQPHIDGITPK) are Mitochondrial matrix-facing. Residues 35-58 (QLVRILPTAAAWTGVALFAVVYYA) traverse the membrane as a helical segment. Residues 59–91 (SGIPRLRRDVLQRIPYLGERYFVNEIPASDNPF) lie on the Mitochondrial intermembrane side of the membrane.

This sequence belongs to the UQCR11/QCR10 family. Component of the ubiquinol-cytochrome c oxidoreductase (cytochrome b-c1 complex, complex III, CIII), a multisubunit enzyme composed of 10 subunits. The complex is composed of 3 respiratory subunits cytochrome b (cob), cytochrome c1 (cyt-1) and Rieske protein (fes-1), 2 core protein subunits pep and ucr-1, and 5 low-molecular weight protein subunits qcr6, qcr7, qcr8, qcr9 and probably NCU16844/qcr10. The complex exists as an obligatory dimer and forms supercomplexes (SCs) in the inner mitochondrial membrane with NADH-ubiquinone oxidoreductase (complex I, CI) and cytochrome c oxidase (complex IV, CIV), resulting in different assemblies (supercomplexes SCI(1)III(2), SCIII(2)IV(1) and SCIII(2)IV(2) as well as higher order I(x)III(y)IV(z) megacomplexes).

It localises to the mitochondrion inner membrane. Its function is as follows. Component of the ubiquinol-cytochrome c oxidoreductase, a multisubunit transmembrane complex that is part of the mitochondrial electron transport chain which drives oxidative phosphorylation. The respiratory chain contains 3 multisubunit complexes succinate dehydrogenase (complex II, CII), ubiquinol-cytochrome c oxidoreductase (cytochrome b-c1 complex, complex III, CIII) and cytochrome c oxidase (complex IV, CIV), that cooperate to transfer electrons derived from NADH and succinate to molecular oxygen, creating an electrochemical gradient over the inner membrane that drives transmembrane transport and the ATP synthase. The cytochrome b-c1 complex catalyzes electron transfer from ubiquinol to cytochrome c, linking this redox reaction to translocation of protons across the mitochondrial inner membrane, with protons being carried across the membrane as hydrogens on the quinol. In the process called Q cycle, 2 protons are consumed from the matrix, 4 protons are released into the intermembrane space and 2 electrons are passed to cytochrome c. The protein is Cytochrome b-c1 complex subunit 10, mitochondrial of Neurospora crassa (strain ATCC 24698 / 74-OR23-1A / CBS 708.71 / DSM 1257 / FGSC 987).